The sequence spans 151 residues: NADPH-dependent 7-cyano-7-deazaguanine reductase (151 aa).

The active-site Thioimide intermediate is C49. D56 (proton donor) is an active-site residue. Substrate contacts are provided by residues 71 to 73 and 90 to 91; these read IES and HE.

The protein belongs to the GTP cyclohydrolase I family. QueF type 1 subfamily.

The protein resides in the cytoplasm. It carries out the reaction 7-aminomethyl-7-carbaguanine + 2 NADP(+) = 7-cyano-7-deazaguanine + 2 NADPH + 3 H(+). Its pathway is tRNA modification; tRNA-queuosine biosynthesis. Functionally, catalyzes the NADPH-dependent reduction of 7-cyano-7-deazaguanine (preQ0) to 7-aminomethyl-7-deazaguanine (preQ1). This chain is NADPH-dependent 7-cyano-7-deazaguanine reductase, found in Caulobacter vibrioides (strain ATCC 19089 / CIP 103742 / CB 15) (Caulobacter crescentus).